A 64-amino-acid polypeptide reads, in one-letter code: MDETVKLNHTCVICDQEKNRGIHLYTKFICLDCERKVISTSTSDPDYAFYVKKLKSIHTPPLYS.

Residues C11, C14, C30, and C33 each contribute to the Zn(2+) site.

As to quaternary structure, probably functions as a homodimer. Interacts with sigma-G factor, recognition occurs via the first 71 residues of sigma-G. The cofactor is Zn(2+).

Functionally, an anti-sigma-G factor, prevents premature activation of sigma-G factor in the forespore; overexpression leads to 1000-fold reduction in spore formation, spore formation stops after engulfment. Overexpression also inhibits sigma-G transcription activation activity. When both Gin and sigma-G are expressed in E.coli Gin inhibits sigma-G, strongly suggesting Gin inhibits by direct physical interaction. The sequence is that of Anti-sigma-G factor Gin from Bacillus subtilis (strain 168).